A 343-amino-acid polypeptide reads, in one-letter code: Allantoicase (343 aa).

Belongs to the allantoicase family.

The catalysed reaction is allantoate + H2O = (S)-ureidoglycolate + urea. It functions in the pathway nitrogen metabolism; (S)-allantoin degradation; (S)-ureidoglycolate from allantoate (aminidohydrolase route): step 1/1. Functionally, utilization of purines as secondary nitrogen sources, when primary sources are limiting. This Saccharomyces cerevisiae (strain ATCC 204508 / S288c) (Baker's yeast) protein is Allantoicase (DAL2).